Reading from the N-terminus, the 503-residue chain is Lysine--tRNA ligase (503 aa).

Mg(2+) is bound by residues E414 and E421.

The protein belongs to the class-II aminoacyl-tRNA synthetase family. In terms of assembly, homodimer. It depends on Mg(2+) as a cofactor.

The protein localises to the cytoplasm. It catalyses the reaction tRNA(Lys) + L-lysine + ATP = L-lysyl-tRNA(Lys) + AMP + diphosphate. The protein is Lysine--tRNA ligase of Laribacter hongkongensis (strain HLHK9).